A 184-amino-acid polypeptide reads, in one-letter code: Holliday junction branch migration complex subunit RuvA (184 aa).

The domain I stretch occupies residues 1 to 64 (MIKAIEGVVT…EDANLLYGFL (64 aa)). The segment at 65-134 (DANEQKMFEM…IAELSDTKLI (70 aa)) is domain II. The tract at residues 134–137 (ISDE) is flexible linker. The domain III stretch occupies residues 138–184 (SVPSYQNEALLALEALGFKREKIVKILPDCKSENTSDLIKEALKKLG).

It belongs to the RuvA family. As to quaternary structure, homotetramer. Forms an RuvA(8)-RuvB(12)-Holliday junction (HJ) complex. HJ DNA is sandwiched between 2 RuvA tetramers; dsDNA enters through RuvA and exits via RuvB. An RuvB hexamer assembles on each DNA strand where it exits the tetramer. Each RuvB hexamer is contacted by two RuvA subunits (via domain III) on 2 adjacent RuvB subunits; this complex drives branch migration. In the full resolvosome a probable DNA-RuvA(4)-RuvB(12)-RuvC(2) complex forms which resolves the HJ.

The protein localises to the cytoplasm. Functionally, the RuvA-RuvB-RuvC complex processes Holliday junction (HJ) DNA during genetic recombination and DNA repair, while the RuvA-RuvB complex plays an important role in the rescue of blocked DNA replication forks via replication fork reversal (RFR). RuvA specifically binds to HJ cruciform DNA, conferring on it an open structure. The RuvB hexamer acts as an ATP-dependent pump, pulling dsDNA into and through the RuvAB complex. HJ branch migration allows RuvC to scan DNA until it finds its consensus sequence, where it cleaves and resolves the cruciform DNA. The sequence is that of Holliday junction branch migration complex subunit RuvA from Campylobacter concisus (strain 13826).